Reading from the N-terminus, the 275-residue chain is Nitrogenase iron protein 1 (275 aa).

9–16 contributes to the ATP binding site; sequence GKGGIGKS. Position 97 (Cys97) interacts with [4Fe-4S] cluster. Arg100 is subject to ADP-ribosylarginine; by dinitrogenase reductase ADP-ribosyltransferase. Cys132 serves as a coordination point for [4Fe-4S] cluster.

This sequence belongs to the NifH/BchL/ChlL family. Homodimer. The cofactor is [4Fe-4S] cluster. In terms of processing, the reversible ADP-ribosylation of Arg-100 inactivates the nitrogenase reductase and regulates nitrogenase activity.

It carries out the reaction N2 + 8 reduced [2Fe-2S]-[ferredoxin] + 16 ATP + 16 H2O = H2 + 8 oxidized [2Fe-2S]-[ferredoxin] + 2 NH4(+) + 16 ADP + 16 phosphate + 6 H(+). In terms of biological role, the key enzymatic reactions in nitrogen fixation are catalyzed by the nitrogenase complex, which has 2 components: the iron protein and the molybdenum-iron protein. This is Nitrogenase iron protein 1 (nifH1) from Methanothermobacter marburgensis (strain ATCC BAA-927 / DSM 2133 / JCM 14651 / NBRC 100331 / OCM 82 / Marburg) (Methanobacterium thermoautotrophicum).